The sequence spans 360 residues: Tryptophan--tRNA ligase, mitochondrial (360 aa).

Residues methionine 1 to alanine 18 constitute a mitochondrion transit peptide. ATP is bound by residues glutamine 42 and histidine 48 to asparagine 51. Aspartate 167 contacts L-tryptophan. Residues glycine 179 to aspartate 181, valine 217, and lysine 226 to serine 230 contribute to the ATP site.

The protein belongs to the class-I aminoacyl-tRNA synthetase family.

It is found in the mitochondrion matrix. The protein localises to the mitochondrion. The enzyme catalyses tRNA(Trp) + L-tryptophan + ATP = L-tryptophyl-tRNA(Trp) + AMP + diphosphate + H(+). Its function is as follows. Catalyzes the attachment of tryptophan to tRNA(Trp) in a two-step reaction: tryptophan is first activated by ATP to form Trp-AMP and then transferred to the acceptor end of tRNA(Trp). This is Tryptophan--tRNA ligase, mitochondrial (Wars2) from Mus musculus (Mouse).